The sequence spans 129 residues: MAREPQRLRRRERKNISSGVAHVNATFNNTMITITDAQGNAIAWSSAGMMGFKGSRKSTPYAAQVCAEDAGKKAAEHGVRTLEVEVKGPGAGRESALRALQAVGFHITSIRDVTPIPHNGVRPAKRRRV.

This sequence belongs to the universal ribosomal protein uS11 family. As to quaternary structure, part of the 30S ribosomal subunit. Interacts with proteins S7 and S18. Binds to IF-3.

Functionally, located on the platform of the 30S subunit, it bridges several disparate RNA helices of the 16S rRNA. Forms part of the Shine-Dalgarno cleft in the 70S ribosome. The polypeptide is Small ribosomal subunit protein uS11 (Sphingopyxis alaskensis (strain DSM 13593 / LMG 18877 / RB2256) (Sphingomonas alaskensis)).